We begin with the raw amino-acid sequence, 518 residues long: Coiled-coil domain-containing protein 82 (518 aa).

Positions Met1 to Lys14 are enriched in basic residues. The tract at residues Met1–Gly266 is disordered. Over residues Gln16 to His27 the composition is skewed to basic and acidic residues. Over residues Asp38–Leu67 the composition is skewed to acidic residues. Over residues Asp68 to Lys89 the composition is skewed to basic and acidic residues. Over residues Ser92–Ser107 the composition is skewed to polar residues. Basic and acidic residues predominate over residues Glu111–His127. 2 positions are modified to phosphoserine: Ser170 and Ser194. Positions Asp191–Glu201 are enriched in acidic residues. Thr202 is subject to Phosphothreonine. Positions Glu204–Asn232 form a coiled coil. Positions His215–Ser225 are enriched in basic and acidic residues. Residues Gly249–Gly266 show a composition bias toward acidic residues. Phosphoserine is present on Ser305.

This is Coiled-coil domain-containing protein 82 (Ccdc82) from Mus musculus (Mouse).